The primary structure comprises 431 residues: Tol-Pal system protein TolB (431 aa).

The N-terminal stretch at Met-1–Ala-26 is a signal peptide. A disordered region spans residues Asp-406–Gln-431.

The protein belongs to the TolB family. In terms of assembly, the Tol-Pal system is composed of five core proteins: the inner membrane proteins TolA, TolQ and TolR, the periplasmic protein TolB and the outer membrane protein Pal. They form a network linking the inner and outer membranes and the peptidoglycan layer.

The protein localises to the periplasm. Its function is as follows. Part of the Tol-Pal system, which plays a role in outer membrane invagination during cell division and is important for maintaining outer membrane integrity. The protein is Tol-Pal system protein TolB of Burkholderia orbicola (strain MC0-3).